Reading from the N-terminus, the 7760-residue chain is Malpinin synthetase (7760 aa).

Disordered regions lie at residues 42–115 and 161–180; these read ENPE…VNEK and LDLP…GDRV. The segment covering 65-79 has biased composition (polar residues); the sequence is TPRSASPLSSYTGSP. The tract at residues 87-389 is condensation 1; it reads TELSRTLSGD…LSLDERTFLL (303 aa). The span at 164–180 shows a compositional bias: basic and acidic residues; the sequence is PTDRPRPSHPSFEGDRV. An adenylation 1 region spans residues 409-813; that stretch reads FEQQAERRPH…GRNDHQVKIR (405 aa). In terms of domain architecture, Carrier 1 spans 926–1000; sequence PPQGELETAI…AFAHAIGQHR (75 aa). At Ser-961 the chain carries O-(pantetheine 4'-phosphoryl)serine. A dual epimerase/condensation (E/C) domain 1 region spans residues 1046–1477; the sequence is QDIYALAPLQ…VLPADERKLL (432 aa). Residues 1498-1893 are adenylation 2; that stretch reads FEQYADRVPN…GRTDYQVKIR (396 aa). The region spanning 2003 to 2077 is the Carrier 2 domain; the sequence is APEGEVENAI…ALAQSIGEHR (75 aa). Residue Ser-2038 is modified to O-(pantetheine 4'-phosphoryl)serine. The interval 2099–2558 is dual epimerase/condensation (E/C) domain 2; the sequence is PLIDLNQNDI…LPTEERQLLT (460 aa). Positions 2578–2973 are adenylation 3; it reads FEQHVDRAPD…GRADFQVKIR (396 aa). In terms of domain architecture, Carrier 3 spans 3083–3157; that stretch reads APQGAVEAAI…ALAQSIGEHR (75 aa). Ser-3118 bears the O-(pantetheine 4'-phosphoryl)serine mark. The tract at residues 3203–3634 is dual epimerase/condensation (E/C) domain 3; sequence QDIYALAPLQ…HLNVLPAEER (432 aa). The tract at residues 3658-4057 is adenylation 4; sequence FEQQAERTPD…GRNDDQIKIR (400 aa). One can recognise a Carrier 4 domain in the interval 4174 to 4248; it reads APQGEVETAL…AFASRVQEQL (75 aa). Ser-4209 bears the O-(pantetheine 4'-phosphoryl)serine mark. Residues 4267 to 4705 form a condensation 2 region; it reads LPLSFAQQRL…AAEILSQDER (439 aa). The tract at residues 4729 to 5133 is adenylation 5; it reads FEQRVESTPD…GRNDHQVKIR (405 aa). A Carrier 5 domain is found at 5250–5324; it reads APEGEVETAI…VFAASIGHHQ (75 aa). Ser-5285 is subject to O-(pantetheine 4'-phosphoryl)serine. A dual dehydration/condensation (C*) domain region spans residues 5370–5804; that stretch reads QDIYSLSPLQ…VLPAEERTLL (435 aa). The adenylation 6 stretch occupies residues 5825–6224; it reads FEQQSERTPE…GRNDDQVKIR (400 aa). One can recognise a Carrier 6 domain in the interval 6338–6412; that stretch reads APQGEVETAL…ALAQSIGQHH (75 aa). Residue Ser-6373 is modified to O-(pantetheine 4'-phosphoryl)serine. The segment at 6458–6890 is dual epimerase/condensation (E/C) domain 4; sequence QDIYALSPLQ…QLDTVPAEEH (433 aa). The interval 6914 to 7300 is adenylation 7; sequence FEHQVERTPA…KFLPDGNVVC (387 aa). Residues 7428–7503 enclose the Carrier 7 domain; the sequence is EPRGAIENIL…ELAPRLLATG (76 aa). At Ser-7463 the chain carries O-(pantetheine 4'-phosphoryl)serine. A thioesterase (TE) domain region spans residues 7561–7722; the sequence is DNGNMASSLD…KPYVQGSIEV (162 aa).

This sequence belongs to the NRP synthetase family.

Its function is as follows. Heptamodular nonribosomal peptide synthetase that catalyzes the biosynthesis of malpinins, natural products that show biosurfactant activities. Malpinins are acetylated hexapeptides (Ac-D-Leu/Val-D-Arg-D-Leu/Val-L-Phe/Leu-Dhb-D-Trp) containing a non-canonical amino acid derived from dehydration of L-Trp, (Z)-dehydrobutyrine (Dhb), at position 5, as well as a C-terminal D-amino acid, D-tryptophan, that can be oxidized to kynurenine. Incorporated D-amino acids in positions 1, 3 and 4 are variable resulting in the malpinin A-congeners malpinin B to E. Both modules M1 and M3 have relaxed specificity towards aliphatic amino acids (L-Leu &gt; L-Met &gt; L/D-Val &gt; L-Cys), explaining Val at position 1 and 3 in malpinin A-congeners malpinin B to D. The incorporation of L-Leu, but not N-acetyl-L-Leu by module 1 suggests the N-terminal acetylation occurs at a later stage of biosynthesis. Similar to M1 and M3, M4 has a broad substrate spectrum showing the highest activity with L-Phe followed by other hydrophobic amino acids (L-Phe &gt; L-Met = L-Trp). In contrast, M2, M5 and M6 are highly specific for L-Arg, L-Thr, and L-Trp, respectively. Solely, M7 converted its preferred substrate (L-Phe) with a 15 000-fold reduced turnover rate compared to the most active module M6, indicating that its A domain cannot contribute to the malpinin biosynthesis due to low activity. Since the last T domain in malA is apparently not loaded with an amino acid, either the TE domain must offload the oligopeptide from the preceding T domain or the dual E/C domain of M7 must transfer the final peptide chain to the free acceptor T domain of M7 prior to release. In Mortierella alpina (Oleaginous fungus), this protein is Malpinin synthetase.